A 155-amino-acid chain; its full sequence is uncharacterized protein (155 aa).

The interval 1-34 is disordered; the sequence is MESLQTPQHRENQDKREKEYGVKHMPMGNNAGNL. Residues 8–22 are compositionally biased toward basic and acidic residues; the sequence is QHRENQDKREKEYGV. Residues 115–135 form a helical membrane-spanning segment; that stretch reads MSLLLLPAFSGLTWAPFLFLF.

It is found in the membrane. This is an uncharacterized protein from Homo sapiens (Human).